Reading from the N-terminus, the 337-residue chain is ATP-dependent 6-phosphofructokinase (337 aa).

An ATP-binding site is contributed by glycine 11. 21–25 (RAVVR) is an ADP binding site. ATP contacts are provided by residues 72 to 73 (RY) and 102 to 105 (GDGS). Position 103 (aspartate 103) interacts with Mg(2+). 125-127 (TID) provides a ligand contact to substrate. Aspartate 127 (proton acceptor) is an active-site residue. Residue arginine 154 participates in ADP binding. Residues arginine 162 and 169–171 (MGR) each bind substrate. ADP is bound by residues 185–187 (GAD), lysine 212, and 214–216 (KNH). Substrate-binding positions include glutamate 223, arginine 245, and 251–254 (HILR).

This sequence belongs to the phosphofructokinase type A (PFKA) family. ATP-dependent PFK group I subfamily. Prokaryotic clade 'B1' sub-subfamily. As to quaternary structure, homotetramer. Requires Mg(2+) as cofactor.

The protein resides in the cytoplasm. It catalyses the reaction beta-D-fructose 6-phosphate + ATP = beta-D-fructose 1,6-bisphosphate + ADP + H(+). The protein operates within carbohydrate degradation; glycolysis; D-glyceraldehyde 3-phosphate and glycerone phosphate from D-glucose: step 3/4. Its activity is regulated as follows. Allosterically activated by ADP and other diphosphonucleosides, and allosterically inhibited by phosphoenolpyruvate. Its function is as follows. Catalyzes the phosphorylation of D-fructose 6-phosphate to fructose 1,6-bisphosphate by ATP, the first committing step of glycolysis. This is ATP-dependent 6-phosphofructokinase from Streptococcus pyogenes serotype M4 (strain MGAS10750).